A 261-amino-acid polypeptide reads, in one-letter code: Precorrin-6A synthase [deacetylating] (261 aa).

The catalysed reaction is precorrin-5 + S-adenosyl-L-methionine + H2O = precorrin-6A + acetate + S-adenosyl-L-homocysteine + 2 H(+). Its pathway is cofactor biosynthesis; adenosylcobalamin biosynthesis; cob(II)yrinate a,c-diamide from precorrin-2 (aerobic route): step 5/10. Catalyzes the methylation of C-1 in precorrin-5 and the subsequent extrusion of acetic acid from the resulting intermediate to form cobalt-precorrin-6A. This Sinorhizobium sp protein is Precorrin-6A synthase [deacetylating] (cobF).